A 156-amino-acid chain; its full sequence is Cyclic pyranopterin monophosphate synthase (156 aa).

Residues 75–77 (LCH) and 111–112 (ME) each bind substrate. The active site involves aspartate 126.

It belongs to the MoaC family. As to quaternary structure, homohexamer; trimer of dimers.

The enzyme catalyses (8S)-3',8-cyclo-7,8-dihydroguanosine 5'-triphosphate = cyclic pyranopterin phosphate + diphosphate. It functions in the pathway cofactor biosynthesis; molybdopterin biosynthesis. Functionally, catalyzes the conversion of (8S)-3',8-cyclo-7,8-dihydroguanosine 5'-triphosphate to cyclic pyranopterin monophosphate (cPMP). This chain is Cyclic pyranopterin monophosphate synthase, found in Corynebacterium glutamicum (strain R).